Consider the following 382-residue polypeptide: Methenyltetrahydrofolate synthase domain-containing protein (382 aa).

The 77-residue stretch at 306 to 382 folds into the RRM domain; the sequence is TTVYLSDIPP…QAKCVSSQKM (77 aa).

This Danio rerio (Zebrafish) protein is Methenyltetrahydrofolate synthase domain-containing protein (mthfsd).